Reading from the N-terminus, the 91-residue chain is Small ribosomal subunit protein uS15c (91 aa).

It belongs to the universal ribosomal protein uS15 family. Part of the 30S ribosomal subunit.

It is found in the plastid. Its subcellular location is the chloroplast. The protein is Small ribosomal subunit protein uS15c (rps15) of Eucalyptus globulus subsp. globulus (Tasmanian blue gum).